The following is a 253-amino-acid chain: Claudin domain-containing protein 1 (253 aa).

A helical transmembrane segment spans residues 5–25 (FATAFVIACVLSLISTIYMAA). 2 N-linked (GlcNAc...) asparagine glycosylation sites follow: Asn-42 and Asn-72. 3 helical membrane passes run 141–161 (FLLP…GLCA), 175–195 (ILHL…VAGI), and 216–236 (FCLA…FIWA).

The protein belongs to the PMP-22/EMP/MP20 family.

The protein resides in the cell junction. It localises to the tight junction. Its subcellular location is the cell membrane. Its function is as follows. Plays a role in negatively regulating the permeability of cells to small molecules. The chain is Claudin domain-containing protein 1 (CLDND1) from Macaca fascicularis (Crab-eating macaque).